The sequence spans 1388 residues: MEVLMAERTNLVFHNKVIDGTAIKRLISRLIDHFGMAYTSHILDQVKALGLRRATATSISLGIDDLLTIPSKRWLVQDAEQQSFLLEKNHHYGNVHVVEKLRQSIEVWYATSEYLRQEMNPNFQMTDPSNPVHLMSFSGARGNASQVHQLVGMRGLMSDPQGQMIDLPIQSNLREGLSVTEYIISCYGARKGVVDTAVRTSDAGYLTRRLVEVVQHILVRRTDCGTIRGISVSPQNGMTEKIFVQTLIGRVLADDIYIGLRCIGTRNKDIGIGLVNRFITFQAHPIYIRTPFTCRSTSWICQLCYGRSPTHGDLVELGEAVGIIAGQSIGEPGTQLTLRTFHTGGVFTGGTAEHVRAPSNGKIKFDEGLVHPTRTRHGHPAFLCFIDFYVTIESRDIRHNVNIPTKSLILVQNDQYVESEQVIAEIRAETSTFHFKERVQKHIYSESEGEMHWSTDGYHTPKYPYSNVHLLPKTSHLWILAGGLCRSNSNIVSFSLHKDQDQMNANSFSLKDLFDLSLTNDQVRHKLLDTFGKKDRESLDYSKPYRIISKGHWNLIEPSTYIRQENSLAKKRRNRFVIPLQYDQEQENKLIPCFGISIKIPINGILRRNSIIAYFDDPRYRRSSSGITKYGIVEVDSIVKKEDLIEYRGAKDFSPKYQTQMKVDQFFFIPEEIHILPGSSPIMVRNNSIIGVDTRLVLNINTRSRVGGLVRVERKKKSLELKIFSGDIHFYGEVDKISRHSGILIPPGIGKKDSKGSKKLKNWIYVQRITPTKKKYFVLVRPVVTYEIADGINLATLFSQDLLQEKNNVQLRIVNYILYENGKSIRGISHTSIQLVRACLVLTWDQEKKSSIEEKVHASFVEIRTNDLLCYFIRIELVKSTLSYTEKRYDTAGSGLISNNELDRIHRKNPFDSKAKIQIFPQHQGTLGTLLNRNKECQSFLILSSSNCSRIGPFNTSRYNNATKELDPMTPIRYLLGPLGTIVPRIVNSRSSYYLRTYNQVFLKKSFLLENFQQTFQVLQVPPFQYCFLDENSRIYNPDPCSNIIWNSFHLNWCFLHHDSCEEAWPIISLGQFLCENVYLLKYGSRIKKSGQIFIVHVDSLVIRSAKPYLVTPGATVHGHYGETFYEGDTLITFIYEKSRSGDITQGLPKVEQILEVRSIDSISMNLERRVEGWDERIRRILGIPWGFLIGAELTIAQSRISLVNKIQKVYRSQGVQIHNRHLEIIVRQVTSRVLVSEDGMSNVFLPGEFIGLLRAERAGRVLAESICYRAILLGITKSSLNTQSFISEASFQETARVLAKAALRGRIDWLKGLKENVVLGGIIPVGTGFNKLVHRSKQDKNIHLKIKRKNLFELEMSDILLHHRELFCSCAQELSMRHQTNLLRNVS.

Residues Cys224, Cys294, Cys301, and Cys304 each coordinate Zn(2+).

This sequence belongs to the RNA polymerase beta' chain family. RpoC2 subfamily. In plastids the minimal PEP RNA polymerase catalytic core is composed of four subunits: alpha, beta, beta', and beta''. When a (nuclear-encoded) sigma factor is associated with the core the holoenzyme is formed, which can initiate transcription. Zn(2+) is required as a cofactor.

The protein resides in the plastid. The protein localises to the chloroplast. It carries out the reaction RNA(n) + a ribonucleoside 5'-triphosphate = RNA(n+1) + diphosphate. DNA-dependent RNA polymerase catalyzes the transcription of DNA into RNA using the four ribonucleoside triphosphates as substrates. This chain is DNA-directed RNA polymerase subunit beta'', found in Phalaenopsis aphrodite subsp. formosana (Moth orchid).